A 304-amino-acid polypeptide reads, in one-letter code: Zinc carboxypeptidase (304 aa).

The 294-residue stretch at 1–294 (QYHTLPEIYS…DSVVTILKES (294 aa)) folds into the Peptidase M14 domain. The Zn(2+) site is built by H58 and E61. C125 and C148 are joined by a disulfide. Position 184 (H184) interacts with Zn(2+). E259 (proton donor/acceptor) is an active-site residue.

This sequence belongs to the peptidase M14 family. The cofactor is Zn(2+). In terms of tissue distribution, gut specific.

The protein localises to the secreted. Its function is as follows. Involved in the digestion of the blood meal. In Simulium vittatum (Striped black fly), this protein is Zinc carboxypeptidase.